The following is a 133-amino-acid chain: p53 and DNA damage-regulated protein 1 (133 aa).

Belongs to the prefoldin subunit beta family. In terms of assembly, component of the PAQosome complex which is responsible for the biogenesis of several protein complexes and which consists of R2TP complex members RUVBL1, RUVBL2, RPAP3 and PIH1D1, URI complex members PFDN2, PFDN6, PDRG1, UXT and URI1 as well as ASDURF, POLR2E and DNAAF10/WDR92.

It is found in the cytoplasm. May play a role in chaperone-mediated protein folding. The protein is p53 and DNA damage-regulated protein 1 (PDRG1) of Pongo abelii (Sumatran orangutan).